Reading from the N-terminus, the 627-residue chain is Pentatricopeptide repeat-containing protein At2g35030, mitochondrial (627 aa).

A mitochondrion-targeting transit peptide spans 1 to 44; sequence MQSRALSRLRSYYKRSSVFPSSDNDRSVQLFNLVRSIYSSSSRP. PPR repeat units follow at residues 45–75, 76–110, 111–138, 139–173, 174–200, 201–235, 236–262, 263–293, 294–328, 330–360, 365–396, 398–432, 433–467, and 469–499; these read RVPQ…LPER, DVVT…KNVV, TWTA…MPER, NVVS…NIVS, WNSM…MPRR, DVVS…NIIS, WNAM…MPER, DFAS…MPEK, NVIS…GSVK, NVGT…ISKS, NEIV…LVCQ, DLIS…GFKP, SAVT…ESLP, and REEH…DDAR. The segment at 504-579 is type E motif; sequence FYGAILSACN…QPGCSWVKVG (76 aa). A type E(+) motif region spans residues 580–610; it reads KQNHLFVVGDKSHPQFEALDSILSDLRNKMR.

This sequence belongs to the PPR family. PCMP-E subfamily.

Its subcellular location is the mitochondrion. In Arabidopsis thaliana (Mouse-ear cress), this protein is Pentatricopeptide repeat-containing protein At2g35030, mitochondrial (PCMP-E15).